The sequence spans 634 residues: Chaperone protein DnaK (634 aa).

T197 bears the Phosphothreonine; by autocatalysis mark. The span at 515–528 (LHKEDDKKRKESVD) shows a compositional bias: basic and acidic residues. Disordered stretches follow at residues 515 to 536 (LHKEDDKKRKESVDARNGADAI) and 595 to 634 (YKAASAGKNAGGTAGGNGNAGSNGNSGAKKDDDVIDAEVE). The span at 603–615 (NAGGTAGGNGNAG) shows a compositional bias: gly residues.

Belongs to the heat shock protein 70 family.

Acts as a chaperone. The chain is Chaperone protein DnaK from Campylobacter hominis (strain ATCC BAA-381 / DSM 21671 / CCUG 45161 / LMG 19568 / NCTC 13146 / CH001A).